The primary structure comprises 129 residues: Glycine cleavage system H protein (129 aa).

Residues 24 to 106 (LVRVGISAFA…HGEGWLLVVR (83 aa)) enclose the Lipoyl-binding domain. Lys-65 is modified (N6-lipoyllysine).

It belongs to the GcvH family. As to quaternary structure, the glycine cleavage system is composed of four proteins: P, T, L and H. Requires (R)-lipoate as cofactor.

The glycine cleavage system catalyzes the degradation of glycine. The H protein shuttles the methylamine group of glycine from the P protein to the T protein. The sequence is that of Glycine cleavage system H protein from Prochlorococcus marinus (strain MIT 9303).